A 102-amino-acid chain; its full sequence is Large ribosomal subunit protein bL28 (102 aa).

It belongs to the bacterial ribosomal protein bL28 family.

The polypeptide is Large ribosomal subunit protein bL28 (Bradyrhizobium diazoefficiens (strain JCM 10833 / BCRC 13528 / IAM 13628 / NBRC 14792 / USDA 110)).